The following is a 300-amino-acid chain: MNRAFNRKKDKSWMHTPEALAKHFIPYNAKFLGNTEVDQPKGTEVVKDAVRKLKFQRHIKKSEGQKLPKVELQISIYGVKILDPKSKEVQYNCQLHRISFCADDKTDKRIFTFICKDSESNKHLCYVFDSEKCAEEITLTIGQAFDLAYKKFLESGGKDVETRKQIGGLQKRIQDLETENVELKKQLQVLEEQLMIAQVPPGNSMSSKSPTDIFDMVPFSPMTPLVPLPASNGSAPPPPARPTEIRRDLFGAEPFDPFTCGAADFPPDIQSKLDEMQEGFKMGLTVEGTVFSLDPLEGRC.

The PID domain occupies 21-176 (AKHFIPYNAK…GGLQKRIQDL (156 aa)). Positions 160-199 (VETRKQIGGLQKRIQDLETENVELKKQLQVLEEQLMIAQV) form a coiled coil.

The protein belongs to the ced-6 family.

The protein resides in the cytoplasm. Functionally, may function as an adapter protein. Required for efficient phagocytosis of apoptotic cells. May play a role in the internalization and endosomal trafficking of various lrp1 ligands. The sequence is that of PTB domain-containing engulfment adapter protein 1 (gulp1) from Danio rerio (Zebrafish).